Reading from the N-terminus, the 464-residue chain is Sensor protein IrlS (464 aa).

Topologically, residues 1–13 (MIRRLLPRTLRAR) are periplasmic. Residues 14-34 (LTALIILSTAATLALSGVALY) form a helical membrane-spanning segment. Topologically, residues 35–166 (SALHNRLVGM…DHALLRAYAY (132 aa)) are cytoplasmic. Residues 167–187 (TVVVIEVLAVVLTAALAYGIA) form a helical membrane-spanning segment. The region spanning 188–241 (MLGLSPLRRLVARAEQMSSSRLAQPLPELDTSGELKEMEHAFNAMLKRLDESFV) is the HAMP domain. The Periplasmic segment spans residues 188–464 (MLGLSPLRRL…FWLKFPAHAA (277 aa)). Residues 249 to 463 (NLAHDMRTPL…TFWLKFPAHA (215 aa)) enclose the Histidine kinase domain. His-252 carries the post-translational modification Phosphohistidine; by autocatalysis.

The protein localises to the cell inner membrane. The catalysed reaction is ATP + protein L-histidine = ADP + protein N-phospho-L-histidine.. In terms of biological role, member of the two-component regulatory system IrlR/IrlS. May be involved in invasion of eukaryotic cells and heavy-metal resistance. Probably activates IrlR by phosphorylation. The sequence is that of Sensor protein IrlS (irlS) from Burkholderia pseudomallei (strain K96243).